A 196-amino-acid polypeptide reads, in one-letter code: Charged multivesicular body protein 1a (196 aa).

N-acetylmethionine is present on M1. Residues 5–42 (LFQLKFTAKQLEKLAKKAEKDSKAEQAKVKKALQQKNV) adopt a coiled-coil conformation. S101 is modified (phosphoserine). Positions 102–124 (AMDLQKVSAVMDRFEQQVQNLDV) form a coiled coil. A Phosphoserine modification is found at S173. The MIT-interacting motif motif lies at 185-195 (DQLSRRLAALR).

Belongs to the SNF7 family. In terms of assembly, probable peripherally associated component of the endosomal sorting required for transport complex III (ESCRT-III). ESCRT-III components are thought to multimerize to form a flat lattice on the perimeter membrane of the endosome. Several assembly forms of ESCRT-III may exist that interact and act sequentially. Self-associates. Interacts with CHMP1B. Interacts with VPS4A. Interacts with VPS4B. Interacts with PHF1. Interacts with IST1. Interacts with MITD1. As to expression, highly expressed in adult heart, kidney and liver. Expressed at lower levels in adult colon, spleen, lung, brain, testis and muscle. Also expressed in myoblasts and embryo fibroblasts.

Its subcellular location is the cytoplasm. It is found in the endosome membrane. The protein resides in the nucleus matrix. Its function is as follows. Probable peripherally associated component of the endosomal sorting required for transport complex III (ESCRT-III) which is involved in multivesicular bodies (MVBs) formation and sorting of endosomal cargo proteins into MVBs. MVBs contain intraluminal vesicles (ILVs) that are generated by invagination and scission from the limiting membrane of the endosome and mostly are delivered to lysosomes enabling degradation of membrane proteins, such as stimulated growth factor receptors, lysosomal enzymes and lipids. The MVB pathway appears to require the sequential function of ESCRT-O, -I,-II and -III complexes. ESCRT-III proteins mostly dissociate from the invaginating membrane before the ILV is released. The ESCRT machinery also functions in topologically equivalent membrane fission events, such as the terminal stages of cytokinesis. ESCRT-III proteins are believed to mediate the necessary vesicle extrusion and/or membrane fission activities, possibly in conjunction with the AAA ATPase VPS4. Involved in cytokinesis. Involved in recruiting VPS4A and/or VPS4B to the midbody of dividing cells. May also be involved in chromosome condensation. Targets the Polycomb group (PcG) protein BMI1/PCGF4 to regions of condensed chromatin. May play a role in stable cell cycle progression and in PcG gene silencing. The chain is Charged multivesicular body protein 1a (Chmp1a) from Mus musculus (Mouse).